Consider the following 218-residue polypeptide: Guanylate kinase (218 aa).

Positions 17-196 (GVLLALSSPS…ALEKLNEILH (180 aa)) constitute a Guanylate kinase-like domain. Residue 24–31 (SPSGAGKT) participates in ATP binding.

The protein belongs to the guanylate kinase family.

It localises to the cytoplasm. The catalysed reaction is GMP + ATP = GDP + ADP. Essential for recycling GMP and indirectly, cGMP. This is Guanylate kinase from Maricaulis maris (strain MCS10) (Caulobacter maris).